A 206-amino-acid polypeptide reads, in one-letter code: Halorhodopsin (206 aa).

A helical membrane pass occupies residues 1 to 15 (IALAGLSILLFVYMG). At 16-21 (RNVEDP) the chain is on the cytoplasmic side. The chain crosses the membrane as a helical span at residues 22–45 (RAQLIFVATLMVPLVSISSYTGLV). Residues 46-75 (SGLTVGFLEMPAGHALAGMGAGPEGGVFTP) lie on the Extracellular side of the membrane. A helical membrane pass occupies residues 76–97 (WGRYLTWAFSTPMILIALGLLA). The Cytoplasmic segment spans residues 98–100 (GSN). Residues 101 to 124 (MSKLFTAVVADVGMCITGLAAALT) traverse the membrane as a helical segment. Residues 125-127 (TSS) are Extracellular-facing. A helical membrane pass occupies residues 128–150 (YLLRWVWYGISCAFFVVVLYILL). The Cytoplasmic portion of the chain corresponds to 151-162 (AEWAKDAEVAGT). A helical membrane pass occupies residues 163–186 (ADIFNTLKVLTVVLWLGYPIFWAL). At 187–195 (GAEGLAVLD) the chain is on the extracellular side. The chain crosses the membrane as a helical span at residues 196 to 206 (IAITSWAYSGM).

The protein belongs to the archaeal/bacterial/fungal opsin family.

It localises to the cell membrane. Its function is as follows. Light-driven chloride pump. The protein is Halorhodopsin (hop) of Halobacterium halobium (strain mex).